The chain runs to 602 residues: MEISLVPMENGSAMTLRGGGEAGASCVQSPRGECGCPPTAGLNNQSKETSPRRRATHEDAGQGGRPLPPMPQELPQPRRPSAEDEEGEGDPGLGTVEEDQAPQDSGSLHHQRVLINISGLRFETQLGTLAQFPNTLLGDPVKRLRYFDPLRNEYFFDRNRPSFDGILYYYQSGGRLRRPVNVSLDVFADEIRFYQLGDEAMERFREDEGFIKEEEKPLPRNEFQRQVWLIFEYPESSGSARAIAIVSVLVILISIITFCLETLPEFRDERELLRHPPVPPQPPAPAPGANGSGSGVLSSGPTVAPLLPRTLADPFFIVETTCVIWFTFELLVRFFACPSKAEFSRNIMNIIDIVAIFPYFITLGTELAEQQPGGGGQNGQQAMSLAILRVIRLVRVFRIFKLSRHSKGLQILGKTLQASMRELGLLIFFLFIGVILFSSAVYFAEADNQGSHFSSIPDAFWWAVVTMTTVGYGDMRPITVGGKIVGSLCAIAGVLTIALPVPVIVSNFNYFYHRETDHEEQAALKEEQGIQRRESGLDTGGQRKVSCSKASFCKTGGPLESTDSIRRGSCPLEKCHLKAKSNVDLRRSLYALCLDTSRETDL.

Positions 1-107 (MEISLVPMEN…EDQAPQDSGS (107 aa)) are disordered. The segment at 1-202 (MEISLVPMEN…FYQLGDEAME (202 aa)) is tetramerization domain. Over 1 to 238 (MEISLVPMEN…LIFEYPESSG (238 aa)) the chain is Cytoplasmic. A compositionally biased stretch (pro residues) spans 66–78 (PLPPMPQELPQPR). S81 carries the post-translational modification Phosphoserine; by CK2 and PKA. A Glycyl lysine isopeptide (Lys-Gly) (interchain with G-Cter in SUMO) cross-link involves residue K212. The chain crosses the membrane as a helical span at residues 239 to 260 (SARAIAIVSVLVILISIITFCL). Residues 261–314 (ETLPEFRDERELLRHPPVPPQPPAPAPGANGSGSGVLSSGPTVAPLLPRTLADP) are Extracellular-facing. The segment at 274–297 (RHPPVPPQPPAPAPGANGSGSGVL) is disordered. Positions 276–286 (PPVPPQPPAPA) are enriched in pro residues. N290 carries an N-linked (GlcNAc...) asparagine glycan. A helical membrane pass occupies residues 315–336 (FFIVETTCVIWFTFELLVRFFA). C337 is lipidated: S-palmitoyl cysteine. Residues 337 to 347 (CPSKAEFSRNI) are Cytoplasmic-facing. The chain crosses the membrane as a helical span at residues 348–368 (MNIIDIVAIFPYFITLGTELA). The Extracellular portion of the chain corresponds to 369–384 (EQQPGGGGQNGQQAMS). Residues 385–405 (LAILRVIRLVRVFRIFKLSRH) traverse the membrane as a helical; Voltage-sensor segment. Residues 406–420 (SKGLQILGKTLQASM) are Cytoplasmic-facing. The interval 407 to 420 (KGLQILGKTLQASM) is S4-S5 linker. The chain crosses the membrane as a helical span at residues 421 to 442 (RELGLLIFFLFIGVILFSSAVY). The Extracellular segment spans residues 443 to 456 (FAEADNQGSHFSSI). The helical intramembrane region spans 457-468 (PDAFWWAVVTMT). The Selectivity filter signature appears at 469–474 (TVGYGD). Residues 469 to 476 (TVGYGDMR) lie within the membrane without spanning it. The Extracellular portion of the chain corresponds to 477-483 (PITVGGK). Residues 484 to 512 (IVGSLCAIAGVLTIALPVPVIVSNFNYFY) form a helical membrane-spanning segment. Over 513-602 (HRETDHEEQA…CLDTSRETDL (90 aa)) the chain is Cytoplasmic. K525 is covalently cross-linked (Glycyl lysine isopeptide (Lys-Gly) (interchain with G-Cter in SUMO)). A phosphoserine; by PKA mark is found at S535, S546, and S569. A PDZ-binding motif is present at residues 600–602 (TDL).

It belongs to the potassium channel family. A (Shaker) (TC 1.A.1.2) subfamily. Kv1.5/KCNA5 sub-subfamily. As to quaternary structure, homotetramer and heterotetramer of potassium channel proteins. Interacts with DLG1, which enhances channel currents. Forms a ternary complex with DLG1 and CAV3. Interacts with KCNAB1. Interacts with UBE2I. Interacts with XIRP2; the interaction is required for normal action potential configuration in the heart. In terms of processing, glycosylated. Sumoylated on Lys-212, and Lys-525, preferentially with SUMO3. Sumoylation regulates the voltage sensitivity of the channel. Expressed in the heart (at protein level). Expressed in the brain and weakly expressed in the thymus, skeletal muscle and spleen.

Its subcellular location is the cell membrane. The catalysed reaction is K(+)(in) = K(+)(out). Its function is as follows. Voltage-gated potassium channel that mediates transmembrane potassium transport in excitable membranes. Forms tetrameric potassium-selective channels through which potassium ions pass in accordance with their electrochemical gradient. The channel alternates between opened and closed conformations in response to the voltage difference across the membrane. Can form functional homotetrameric channels and heterotetrameric channels that contain variable proportions of KCNA1, KCNA2, KCNA4, KCNA5, and possibly other family members as well; channel properties depend on the type of alpha subunits that are part of the channel. Channel properties are modulated by cytoplasmic beta subunits that regulate the subcellular location of the alpha subunits and promote rapid inactivation. Homotetrameric channels display rapid activation and slow inactivation. Required for normal electrical conduction including formation of the infranodal ventricular conduction system and normal action potential configuration, as a result of its interaction with XIRP2. May play a role in regulating the secretion of insulin in normal pancreatic islets. Functionally, voltage-gated potassium channel that mediates transmembrane potassium transport in excitable membranes. Forms tetrameric potassium-selective channels through which potassium ions pass in accordance with their electrochemical gradient. The channel alternates between opened and closed conformations in response to the voltage difference across the membrane. Inactive. Inhibits expression of isoform 1 and isoform 2. This Mus musculus (Mouse) protein is Potassium voltage-gated channel subfamily A member 5 (Kcna5).